A 64-amino-acid chain; its full sequence is Small hydrophobic protein (64 aa).

The Intravirion segment spans residues M1 to L20. The interval I6 to W15 is interaction with host BCAP31. The helical; Signal-anchor for type II membrane protein transmembrane segment at I21–L44 threads the bilayer. The tract at residues I38–K43 is interaction with small-molecule inhibitor. Residues C45–T64 are Virion surface-facing. A glycan (N-linked (GlcNAc...) asparagine; by host) is linked at N52.

Belongs to the orthopneumovirus small hydrophobic protein family. In terms of assembly, homopentamer forming a funnel-like pore. Interacts with glycoprotein G; this interaction occurs on the surface of virion particles and infected cells. Interacts with host BCAP31 (via C-terminus); this interaction is direct. Four species of SH have been detected in infected cell cytoplasm: a 7.5 kDa non-glycosylated form (SH0), a 13-15 kDa form that contains one or two N-linked carbohydrate side chains of the high-mannose type (SHg), a 21-30 kDa polylactosaminoglycan-modified form of the protein (SHp), and the isoform generated by alternative translational initiation. Of these different forms, SH0 is by far the most abundant protein detected during virus infection. Post-translationally, tyrosine phosphorylated.

Its subcellular location is the virion membrane. It is found in the host cell membrane. The protein resides in the host Golgi apparatus membrane. It localises to the host endoplasmic reticulum membrane. Channel activity is inhibited by copper. Also inhibited by small-molecule pyronin B. Its function is as follows. Viroporin that forms a homopentameric ion channel displaying low ion selectivity. May play a role in virus morphogenesis and pathogenicity at various stages of the viral life cycle. Accumulates at the membrane of the Golgi apparatus in infected cells and may facilitate virus release by modifying the secretory pathway. May enhance host membrane permeability and disrupt cellular ion homeostasis, which can be sensed as damage-associated molecular patterns/danger signals, triggering NLRP3 inflammasome activation and inflammatory immune response. Also inhibits host TNFA-mediated signaling pathway and may delay apoptosis, allowing time for the virus to replicate. This chain is Small hydrophobic protein, found in Homo sapiens (Human).